The primary structure comprises 443 residues: Protein IQ-DOMAIN 11 (443 aa).

Residues 5 to 20 are calmodulin-binding; sequence KGLFTVLKRIFISEVN. 2 consecutive short sequence motifs (nuclear localization signal) follow at residues 11–18 and 27–34; these read LKRIFISE and RRKWTFWK. The disordered stretch occupies residues 44-65; sequence ITAPPEHRTSHESHEEQKEEIV. A compositionally biased stretch (basic and acidic residues) spans 48-64; that stretch reads PEHRTSHESHEEQKEEI. IQ domains are found at residues 113–138 and 139–161; these read AATR…GIVK and LQAY…CLQS. Basic and acidic residues predominate over residues 277 to 293; that stretch reads FSSKTKPKDETLNEKQL. Residues 277 to 361 are disordered; it reads FSSKTKPKDE…PRSFDTQSES (85 aa).

Belongs to the IQD family. In terms of assembly, binds to multiple calmodulin (CaM) in the presence of Ca(2+) and CaM-like proteins. Expressed in hypocotyls, cotyledons, leaves and petioles.

The protein localises to the nucleus. The protein resides in the cytoplasm. It is found in the cytoskeleton. Functionally, may be involved in cooperative interactions with calmodulins or calmodulin-like proteins. Recruits calmodulin proteins to microtubules, thus being a potential scaffold in cellular signaling and trafficking. Regulates cell shape and elongation in aerial organs (i.e. epidermis pavement cells) probably by regulating cortical microtubules (MT) arrays orientation. May associate with nucleic acids and regulate gene expression at the transcriptional or post-transcriptional level. This is Protein IQ-DOMAIN 11 from Arabidopsis thaliana (Mouse-ear cress).